Consider the following 1808-residue polypeptide: Tenascin (1808 aa).

An N-terminal signal peptide occupies residues 1 to 22; it reads MGLPSQVLACAILGLLYQHASG. Positions 23 to 33 are excised as a propeptide; sequence GLIKRIIRQKR. Residue Asn38 is glycosylated (N-linked (GlcNAc...) asparagine). Ser72 is a glycosylation site (O-linked (Xyl...) (chondroitin sulfate) serine). Residues 118–142 adopt a coiled-coil conformation; it reads DIKDLLSRLEELEGLVSSLREQCAS. N-linked (GlcNAc...) asparagine glycans are attached at residues Asn168 and Asn186. One can recognise an EGF-like 1; incomplete domain in the interval 176-188; the sequence is CVCEPGWKGPNCS. 13 consecutive EGF-like domains span residues 188-219, 219-250, 250-281, 281-312, 312-343, 343-374, 374-405, 405-436, 436-467, 467-498, 498-529, 529-560, and 560-591; these read SEPACPRNCLNRGLCVRGKCICEEGFTGEDCS, SQAACPSDCNDQGKCVDGVCVCFEGYTGPDCG, GEELCPHGCGIHGRCVGGRCVCHEGFTGEDCN, NEPLCPNNCHNRGRCVDNECVCDEGYTGEDCG, GELICPNDCFDRGRCINGTCFCEEGYTGEDCG, GELTCPNNCNGNGRCENGLCVCHEGFVGDDCS, SQKRCPKDCNNRGHCVDGRCVCHEGYLGEDCG, GELRCPNDCHNRGRCINGQCVCDEGFIGEDCG, GELRCPNDCHNRGRCVNGQCECHEGFIGEDCG, GELRCPNDCNSHGRCVNGQCVCDEGYTGEDCG, GELRCPNDCHNRGRCVEGRCVCDNGFMGEDCG, GELSCPNDCHQHGRCVDGRCVCHEGFTGEDCR, and RERSCPNDCNNVGRCVEGRCVCEEGYMGIDCS. Disulfide bonds link Cys192–Cys202, Cys196–Cys207, Cys209–Cys218, Cys223–Cys233, Cys227–Cys238, Cys240–Cys249, Cys254–Cys264, Cys258–Cys269, Cys271–Cys280, Cys285–Cys295, Cys289–Cys300, Cys302–Cys311, Cys316–Cys326, Cys320–Cys331, Cys333–Cys342, Cys347–Cys357, Cys351–Cys362, Cys364–Cys373, Cys378–Cys388, Cys382–Cys393, Cys395–Cys404, Cys409–Cys419, Cys413–Cys424, Cys426–Cys435, Cys440–Cys450, Cys444–Cys455, Cys457–Cys466, Cys471–Cys481, Cys475–Cys486, Cys488–Cys497, Cys502–Cys512, Cys506–Cys517, Cys519–Cys528, Cys533–Cys543, Cys537–Cys548, Cys550–Cys559, Cys564–Cys574, Cys568–Cys579, and Cys581–Cys590. Asn328 is a glycosylation site (N-linked (GlcNAc...) asparagine). 11 Fibronectin type-III domains span residues 595-685, 686-775, 776-866, 867-957, 958-1046, 1047-1138, 1139-1228, 1229-1318, 1319-1408, 1409-1495, and 1496-1584; these read PPTE…LPAP, EGLK…TKLD, APSQ…DLDA, PRNL…TDLD, NPKD…EEEP, ELGN…AHPE, VGEL…EAEP, EVDN…TVVG, SPKG…ALDS, PSGL…TGLD, and APKD…TGLL. Residues Asn603, Asn643, Asn751, and Asn759 are each glycosylated (N-linked (GlcNAc...) asparagine). 6 N-linked (GlcNAc...) asparagine glycosylation sites follow: Asn1050, Asn1090, Asn1101, Asn1112, Asn1153, and Asn1183. An N-linked (GlcNAc...) asparagine glycan is attached at Asn1416. The 216-residue stretch at 1582–1797 folds into the Fibrinogen C-terminal domain; the sequence is GLLYPYPKDC…FAEMKLRPSS (216 aa). 2 N-linked (GlcNAc...) asparagine glycosylation sites follow: Asn1736 and Asn1769.

The protein belongs to the tenascin family. Homohexamer; disulfide-linked. A homotrimer may be formed in the triple coiled-coil region and may be stabilized by disulfide rings at both ends. Two of such half-hexabrachions may be disulfide linked within the central globule. Interacts with CSPG5. As to expression, expressed in the brain.

The protein resides in the secreted. It is found in the extracellular space. Its subcellular location is the extracellular matrix. Extracellular matrix protein implicated in guidance of migrating neurons as well as axons during development, synaptic plasticity as well as neuronal regeneration. Ligand for integrins alpha-8/beta-1, alpha-9/beta-1, alpha-V/beta-3 and alpha-V/beta-6. This is Tenascin (TNC) from Gallus gallus (Chicken).